The primary structure comprises 472 residues: tRNA-2-methylthio-N(6)-dimethylallyladenosine synthase (472 aa).

An MTTase N-terminal domain is found at 22 to 142 (RKVFVKTYGC…LPDALKRARA (121 aa)). Cys-31, Cys-67, Cys-105, Cys-183, Cys-187, and Cys-190 together coordinate [4Fe-4S] cluster. The Radical SAM core domain occupies 169–403 (RARGVTAFLT…LLVKQQRGFA (235 aa)). Residues 404–466 (EACVGREIDL…PNSLFAEMIG (63 aa)) form the TRAM domain.

The protein belongs to the methylthiotransferase family. MiaB subfamily. As to quaternary structure, monomer. It depends on [4Fe-4S] cluster as a cofactor.

The protein localises to the cytoplasm. It carries out the reaction N(6)-dimethylallyladenosine(37) in tRNA + (sulfur carrier)-SH + AH2 + 2 S-adenosyl-L-methionine = 2-methylsulfanyl-N(6)-dimethylallyladenosine(37) in tRNA + (sulfur carrier)-H + 5'-deoxyadenosine + L-methionine + A + S-adenosyl-L-homocysteine + 2 H(+). Catalyzes the methylthiolation of N6-(dimethylallyl)adenosine (i(6)A), leading to the formation of 2-methylthio-N6-(dimethylallyl)adenosine (ms(2)i(6)A) at position 37 in tRNAs that read codons beginning with uridine. The chain is tRNA-2-methylthio-N(6)-dimethylallyladenosine synthase from Rhizobium meliloti (strain 1021) (Ensifer meliloti).